Here is a 390-residue protein sequence, read N- to C-terminus: MSSSSSTTTNTTTESDSSSLPTHIGRSNSDGIIDTTPFLPPTVTRTISVDEESNPIHRSARRQGLREAARFLRHAGSRRMMREPSMLVRETAAEQLEERQSDWAYSKPVVFLDILWNLAFVAIGVAVLILSRDEKPNMPLRVWVVGYGIQCWLHMACVCVEYRRRRRRRHPEDGGGSGLTNSSSQQYVSLAQLEDRGETSNPAKHLESANTMFSFIWWIIGFYWVSAGGQTLSSDSPQLYWLCIIFLGFDVFFVVFCVALACVIGLAVCCCLPCIIAILYAVADQEGASKNDIDQMPKFRFTKTGNVEKLSGKARGIMTECGTDSPIERSLSPEDAECCICLCEYEDGVELRELPCNHHFHCTCIDKWLHINSRCPLCKFNILKNANNEV.

Residues M1–S19 show a composition bias toward low complexity. Positions M1–L39 are disordered. A run of 5 helical transmembrane segments spans residues V109–I129, V142–Y162, M212–L232, I244–I264, and G265–Q285. The RING-type; atypical zinc-finger motif lies at C338 to K379.

It is found in the membrane. The catalysed reaction is S-ubiquitinyl-[E2 ubiquitin-conjugating enzyme]-L-cysteine + [acceptor protein]-L-lysine = [E2 ubiquitin-conjugating enzyme]-L-cysteine + N(6)-ubiquitinyl-[acceptor protein]-L-lysine.. It functions in the pathway protein modification; protein ubiquitination. Functionally, mediates E2-dependent protein ubiquitination in vitro. This is E3 ubiquitin-protein ligase At4g11680 from Arabidopsis thaliana (Mouse-ear cress).